The primary structure comprises 538 residues: Endoglucanase 16 (538 aa).

A signal peptide spans 1–26; the sequence is MRWRRVGDVVAVALLLGAAAAAAAAA. Asp83 acts as the Nucleophile in catalysis. Catalysis depends on residues His431, Asp483, and Glu492. Positions 513–538 are disordered; that stretch reads RQESPSTTTTTTATTSSPEMGLSVNR. The segment covering 516 to 530 has biased composition (low complexity); that stretch reads SPSTTTTTTATTSSP.

The protein belongs to the glycosyl hydrolase 9 (cellulase E) family.

Its subcellular location is the secreted. The catalysed reaction is Endohydrolysis of (1-&gt;4)-beta-D-glucosidic linkages in cellulose, lichenin and cereal beta-D-glucans.. This is Endoglucanase 16 from Oryza sativa subsp. japonica (Rice).